Here is a 104-residue protein sequence, read N- to C-terminus: Large ribosomal subunit protein bL21 (104 aa).

It belongs to the bacterial ribosomal protein bL21 family. Part of the 50S ribosomal subunit. Contacts protein L20.

This protein binds to 23S rRNA in the presence of protein L20. This chain is Large ribosomal subunit protein bL21, found in Helicobacter pylori (strain P12).